Reading from the N-terminus, the 325-residue chain is uncharacterized protein (325 aa).

Composition is skewed to polar residues over residues M1–A21 and E29–A57. Residues M1–Y325 form a disordered region. Residues E86–S109 show a composition bias toward basic and acidic residues. Polar residues-rich tracts occupy residues N114–G167 and Y174–D193. Composition is skewed to low complexity over residues Y200 to H210 and A252 to A278. The segment covering E282–Y325 has biased composition (basic and acidic residues).

This is an uncharacterized protein from Schizosaccharomyces pombe (strain 972 / ATCC 24843) (Fission yeast).